The chain runs to 512 residues: Choline-sulfatase (512 aa).

3 residues coordinate Ca(2+): Asp-14, Gln-15, and Cys-54. Cys-54 serves as the catalytic Nucleophile. 3-oxoalanine (Cys) is present on Cys-54. Residue His-104 is part of the active site. Residues Asp-296 and His-297 each contribute to the Ca(2+) site.

It belongs to the sulfatase family. Requires Ca(2+) as cofactor. In terms of processing, the conversion to 3-oxoalanine (also known as C-formylglycine, FGly), of a serine or cysteine residue in prokaryotes and of a cysteine residue in eukaryotes, is critical for catalytic activity.

The enzyme catalyses choline sulfate + H2O = choline + sulfate + H(+). The protein operates within amine and polyamine biosynthesis; choline biosynthesis; choline from choline sulfate: step 1/1. Converts choline-O-sulfate into choline. The chain is Choline-sulfatase (betC) from Rhizobium meliloti (strain 1021) (Ensifer meliloti).